Here is a 122-residue protein sequence, read N- to C-terminus: Large ribosomal subunit protein uL14 (122 aa).

The protein belongs to the universal ribosomal protein uL14 family. Part of the 50S ribosomal subunit. Forms a cluster with proteins L3 and L19. In the 70S ribosome, L14 and L19 interact and together make contacts with the 16S rRNA in bridges B5 and B8.

Binds to 23S rRNA. Forms part of two intersubunit bridges in the 70S ribosome. The sequence is that of Large ribosomal subunit protein uL14 from Phenylobacterium zucineum (strain HLK1).